A 564-amino-acid chain; its full sequence is Septation ring formation regulator EzrA (564 aa).

The Extracellular portion of the chain corresponds to 1 to 4; that stretch reads MVLY. The helical transmembrane segment at 5 to 23 threads the bilayer; sequence IILAIIVIILIAVGVLFYL. The Cytoplasmic segment spans residues 24 to 564; that stretch reads RSNKRQIIEK…KHIEEEVIKQ (541 aa). 5 coiled-coil regions span residues 99 to 138, 190 to 223, 271 to 300, 350 to 435, and 471 to 550; these read SFNA…YKDN, DGNY…LIRE, LISR…LIEH, VRQF…RRLL, and VKQL…ESVE.

This sequence belongs to the EzrA family.

It localises to the cell membrane. Negative regulator of FtsZ ring formation; modulates the frequency and position of FtsZ ring formation. Inhibits FtsZ ring formation at polar sites. Interacts either with FtsZ or with one of its binding partners to promote depolymerization. This Staphylococcus aureus (strain NCTC 8325 / PS 47) protein is Septation ring formation regulator EzrA.